Consider the following 85-residue polypeptide: CRISPR-associated endoribonuclease Cas2 (85 aa).

Aspartate 8 provides a ligand contact to Mg(2+).

The protein belongs to the CRISPR-associated endoribonuclease Cas2 protein family. Homodimer, forms a heterotetramer with a Cas1 homodimer. It depends on Mg(2+) as a cofactor.

CRISPR (clustered regularly interspaced short palindromic repeat), is an adaptive immune system that provides protection against mobile genetic elements (viruses, transposable elements and conjugative plasmids). CRISPR clusters contain sequences complementary to antecedent mobile elements and target invading nucleic acids. CRISPR clusters are transcribed and processed into CRISPR RNA (crRNA). Functions as a ssRNA-specific endoribonuclease. Involved in the integration of spacer DNA into the CRISPR cassette. The polypeptide is CRISPR-associated endoribonuclease Cas2 (Pyrococcus furiosus (strain ATCC 43587 / DSM 3638 / JCM 8422 / Vc1)).